The chain runs to 207 residues: Hydrogenase expression/formation protein HoxM (207 aa).

Residues Glu-19, Asp-65, and His-96 each contribute to the Ni(2+) site.

Belongs to the peptidase A31 family.

Its function is as follows. Not known. Could be involved in the processing of hydrogenase. The chain is Hydrogenase expression/formation protein HoxM (hoxM) from Azotobacter vinelandii.